Consider the following 448-residue polypeptide: Homogentisate 1,2-dioxygenase (448 aa).

Residue His303 is the Proton acceptor of the active site. Residues His346 and Glu352 each contribute to the Fe cation site. Residues Tyr361 and His382 each contribute to the homogentisate site. His382 serves as a coordination point for Fe cation.

Belongs to the homogentisate dioxygenase family. As to quaternary structure, hexamer; dimer of trimers. Requires Fe cation as cofactor.

The enzyme catalyses homogentisate + O2 = 4-maleylacetoacetate + H(+). It functions in the pathway amino-acid degradation; L-phenylalanine degradation; acetoacetate and fumarate from L-phenylalanine: step 4/6. Its function is as follows. Involved in the catabolism of homogentisate (2,5-dihydroxyphenylacetate or 2,5-OH-PhAc), a central intermediate in the degradation of phenylalanine and tyrosine. Catalyzes the oxidative ring cleavage of the aromatic ring of homogentisate to yield maleylacetoacetate. This Rhodopseudomonas palustris (strain BisB5) protein is Homogentisate 1,2-dioxygenase.